We begin with the raw amino-acid sequence, 316 residues long: Ribosomal RNA small subunit methyltransferase H (316 aa).

S-adenosyl-L-methionine contacts are provided by residues Ala-35–His-37, Asp-55, Phe-84, Asp-105, and Gln-112.

The protein belongs to the methyltransferase superfamily. RsmH family.

It localises to the cytoplasm. It catalyses the reaction cytidine(1402) in 16S rRNA + S-adenosyl-L-methionine = N(4)-methylcytidine(1402) in 16S rRNA + S-adenosyl-L-homocysteine + H(+). Its function is as follows. Specifically methylates the N4 position of cytidine in position 1402 (C1402) of 16S rRNA. The protein is Ribosomal RNA small subunit methyltransferase H of Streptococcus uberis (strain ATCC BAA-854 / 0140J).